The sequence spans 189 residues: Thioredoxin-like protein CITRX, chloroplastic (189 aa).

Residues 1–36 (MAMAAAASLLPACAAPTLPGRAFRPRRNSTPTASLS) constitute a chloroplast transit peptide. A Thioredoxin domain is found at 72–189 (GSGKYIAPDY…MIRNIIDNEL (118 aa)). Residues Cys112 and Cys115 each act as nucleophile in the active site. The cysteines at positions 112 and 115 are disulfide-linked.

The protein belongs to the thioredoxin family. Plant CITRX-type subfamily.

It localises to the plastid. The protein resides in the chloroplast. Probable thiol-disulfide oxidoreductase that may play a role in proper chloroplast development. The sequence is that of Thioredoxin-like protein CITRX, chloroplastic from Oryza sativa subsp. indica (Rice).